The chain runs to 88 residues: Small ribosomal subunit protein bS18A (88 aa).

The protein belongs to the bacterial ribosomal protein bS18 family. In terms of assembly, part of the 30S ribosomal subunit. Forms a tight heterodimer with protein bS6.

Binds as a heterodimer with protein bS6 to the central domain of the 16S rRNA, where it helps stabilize the platform of the 30S subunit. This is Small ribosomal subunit protein bS18A from Roseiflexus sp. (strain RS-1).